The chain runs to 396 residues: MSEFIAENRGADAITRPNWSAVFSVAFCVACLIIVEFLPVSLLTPMAQDLGISEGVAGQSVTVTAFVAMFASLFITQTIQATDRCYVVILFAVLLTLSCLLVSFANSFSLLLIGRACLGLALGGFWAMSASLTMRLVPPRTVPKALSVIFGAVSIALVIAAPLGSFLGELIGWRNVFNAAAVMGVLCIFWIIKSLPSLPGEPSHQKQNTFRLLQRPGVMAGMIAIFMSFAGQFAFFTYIRPVYMNLAGFGVDGLTLVLLSFGIASFIGTSLSSFILKRSVKLALAGAPLILAVSALVLTLWGSDKIVATGVAIIWGLTFALVPVGWSTWITRSLADQAEKAGSIQVAVIQLANTCGAAIGGYALDNIGLTSPLMLSGTLMLLTALLVTAKVKMKKS.

The Cytoplasmic segment spans residues 1–21 (MSEFIAENRGADAITRPNWSA). The helical transmembrane segment at 22–42 (VFSVAFCVACLIIVEFLPVSL) threads the bilayer. Residues 43-54 (LTPMAQDLGISE) are Periplasmic-facing. Residues 55 to 75 (GVAGQSVTVTAFVAMFASLFI) form a helical membrane-spanning segment. Residues 76–85 (TQTIQATDRC) are Cytoplasmic-facing. Residues 86-106 (YVVILFAVLLTLSCLLVSFAN) form a helical membrane-spanning segment. Residue serine 107 is a topological domain, periplasmic. A helical membrane pass occupies residues 108–128 (FSLLLIGRACLGLALGGFWAM). At 129-147 (SASLTMRLVPPRTVPKALS) the chain is on the cytoplasmic side. The chain crosses the membrane as a helical span at residues 148 to 168 (VIFGAVSIALVIAAPLGSFLG). Topologically, residues 169 to 175 (ELIGWRN) are periplasmic. Residues 176–196 (VFNAAAVMGVLCIFWIIKSLP) form a helical membrane-spanning segment. Residues 197–215 (SLPGEPSHQKQNTFRLLQR) are Cytoplasmic-facing. A helical membrane pass occupies residues 216 to 236 (PGVMAGMIAIFMSFAGQFAFF). At 237–255 (TYIRPVYMNLAGFGVDGLT) the chain is on the periplasmic side. The helical transmembrane segment at 256–276 (LVLLSFGIASFIGTSLSSFIL) threads the bilayer. The Cytoplasmic segment spans residues 277 to 281 (KRSVK). Residues 282 to 302 (LALAGAPLILAVSALVLTLWG) traverse the membrane as a helical segment. The Periplasmic segment spans residues 303-305 (SDK). Residues 306-326 (IVATGVAIIWGLTFALVPVGW) traverse the membrane as a helical segment. The Cytoplasmic segment spans residues 327-343 (STWITRSLADQAEKAGS). A helical membrane pass occupies residues 344–364 (IQVAVIQLANTCGAAIGGYAL). Residues 365-366 (DN) lie on the Periplasmic side of the membrane. A helical transmembrane segment spans residues 367–387 (IGLTSPLMLSGTLMLLTALLV). Topologically, residues 388–396 (TAKVKMKKS) are cytoplasmic.

The protein belongs to the major facilitator superfamily. DHA1 family. NepI (TC 2.A.1.2.26) subfamily.

The protein localises to the cell inner membrane. It catalyses the reaction inosine(in) + H(+)(out) = inosine(out) + H(+)(in). The catalysed reaction is guanosine(in) + H(+)(out) = guanosine(out) + H(+)(in). In terms of biological role, involved in the efflux of purine ribonucleosides, such as inosine and guanosine. The sequence is that of Purine ribonucleoside efflux pump NepI from Shigella boydii serotype 4 (strain Sb227).